Here is a 41-residue protein sequence, read N- to C-terminus: Photosystem II reaction center protein Y (41 aa).

A helical transmembrane segment spans residues 4 to 22; that stretch reads LIVVVLPILAAVTWVVFNI.

Belongs to the PsbY family. PSII is composed of 1 copy each of membrane proteins PsbA, PsbB, PsbC, PsbD, PsbE, PsbF, PsbH, PsbI, PsbJ, PsbK, PsbL, PsbM, PsbT, PsbX, PsbY, Psb30/Ycf12, peripheral proteins PsbO, CyanoQ (PsbQ), PsbU, PsbV and a large number of cofactors. It forms dimeric complexes.

The protein localises to the cellular thylakoid membrane. Its function is as follows. Loosely associated component of the core of photosystem II (PSII), it is not always seen in crystals. PSII is a light-driven water plastoquinone oxidoreductase, using light energy to abstract electrons from H(2)O, generating a proton gradient subsequently used for ATP formation. This chain is Photosystem II reaction center protein Y, found in Prochlorococcus marinus (strain MIT 9211).